Here is a 371-residue protein sequence, read N- to C-terminus: UDP-N-acetylglucosamine--N-acetylmuramyl-(pentapeptide) pyrophosphoryl-undecaprenol N-acetylglucosamine transferase (371 aa).

UDP-N-acetyl-alpha-D-glucosamine contacts are provided by residues 10-12, asparagine 124, arginine 165, serine 197, isoleucine 251, and glutamine 296; that span reads TGG.

The protein belongs to the glycosyltransferase 28 family. MurG subfamily.

Its subcellular location is the cell membrane. It carries out the reaction di-trans,octa-cis-undecaprenyl diphospho-N-acetyl-alpha-D-muramoyl-L-alanyl-D-glutamyl-meso-2,6-diaminopimeloyl-D-alanyl-D-alanine + UDP-N-acetyl-alpha-D-glucosamine = di-trans,octa-cis-undecaprenyl diphospho-[N-acetyl-alpha-D-glucosaminyl-(1-&gt;4)]-N-acetyl-alpha-D-muramoyl-L-alanyl-D-glutamyl-meso-2,6-diaminopimeloyl-D-alanyl-D-alanine + UDP + H(+). Its pathway is cell wall biogenesis; peptidoglycan biosynthesis. Functionally, cell wall formation. Catalyzes the transfer of a GlcNAc subunit on undecaprenyl-pyrophosphoryl-MurNAc-pentapeptide (lipid intermediate I) to form undecaprenyl-pyrophosphoryl-MurNAc-(pentapeptide)GlcNAc (lipid intermediate II). This is UDP-N-acetylglucosamine--N-acetylmuramyl-(pentapeptide) pyrophosphoryl-undecaprenol N-acetylglucosamine transferase from Carboxydothermus hydrogenoformans (strain ATCC BAA-161 / DSM 6008 / Z-2901).